The chain runs to 510 residues: Bifunctional purine biosynthesis protein PurH (510 aa).

An MGS-like domain is found at 1–143; the sequence is MTKRALISVS…KNHSGVLVLV (143 aa).

This sequence belongs to the PurH family.

It carries out the reaction (6R)-10-formyltetrahydrofolate + 5-amino-1-(5-phospho-beta-D-ribosyl)imidazole-4-carboxamide = 5-formamido-1-(5-phospho-D-ribosyl)imidazole-4-carboxamide + (6S)-5,6,7,8-tetrahydrofolate. It catalyses the reaction IMP + H2O = 5-formamido-1-(5-phospho-D-ribosyl)imidazole-4-carboxamide. The protein operates within purine metabolism; IMP biosynthesis via de novo pathway; 5-formamido-1-(5-phospho-D-ribosyl)imidazole-4-carboxamide from 5-amino-1-(5-phospho-D-ribosyl)imidazole-4-carboxamide (10-formyl THF route): step 1/1. It functions in the pathway purine metabolism; IMP biosynthesis via de novo pathway; IMP from 5-formamido-1-(5-phospho-D-ribosyl)imidazole-4-carboxamide: step 1/1. The polypeptide is Bifunctional purine biosynthesis protein PurH (Deinococcus deserti (strain DSM 17065 / CIP 109153 / LMG 22923 / VCD115)).